Reading from the N-terminus, the 75-residue chain is Neuropeptide-like protein 31 (75 aa).

Positions 1–22 are cleaved as a signal peptide; the sequence is MISTSSILVLVVLLACFMAANA. Residues Tyr29, Tyr39, Tyr49, Tyr56, and Tyr64 each carry the tyrosine amide modification. Position 73 is a tryptophan amide (Trp73).

It belongs to the YARP (YGGW-amide related peptide) family. Expressed in hypoderm.

It localises to the secreted. In terms of biological role, antimicrobial peptides that have antifungal activity against D.coniospora. Has weak antibacterial activity against Gram-positive bacteria M.luteus and Gram-negative E.coli. This Caenorhabditis elegans protein is Neuropeptide-like protein 31 (nlp-31).